Here is a 297-residue protein sequence, read N- to C-terminus: ClpXP adapter protein SpxH (297 aa).

This sequence belongs to the SpxH family. Interacts with Spx.

It is found in the cytoplasm. Functionally, adapter protein required for efficient degradation of Spx by ClpXP under non-stress conditions. Interaction with Spx stabilizes Spx and exposes the C-terminus of Spx for recognition and proteolysis by ClpXP. This Bacillus thuringiensis subsp. konkukian (strain 97-27) protein is ClpXP adapter protein SpxH.